The following is a 533-amino-acid chain: Membrane-associated tyrosine- and threonine-specific cdc2-inhibitory kinase (533 aa).

The disordered stretch occupies residues 1–35 (MEKHHRLPLPELHDDKHRHKQCNGENSNRFRPPKY). Residues 102-351 (FERLAKLGEG…AEQLLSHPKL (250 aa)) form the Protein kinase domain. ATP contacts are provided by residues 108-116 (LGEGSFGEV) and K131. D224 (proton acceptor) is an active-site residue. Mg(2+) contacts are provided by N229 and D243. Phosphoserine is present on residues S504 and S519.

Belongs to the protein kinase superfamily. Ser/Thr protein kinase family. WEE1 subfamily.

It localises to the golgi apparatus membrane. It carries out the reaction L-seryl-[protein] + ATP = O-phospho-L-seryl-[protein] + ADP + H(+). The catalysed reaction is L-threonyl-[protein] + ATP = O-phospho-L-threonyl-[protein] + ADP + H(+). Its function is as follows. Acts as a negative regulator of entry into mitosis (G2 to M transition) by phosphorylation of Cdk1 specifically when Cdk1 is complexed to cyclins. Mediates phosphorylation of Cdk1 predominantly on 'Thr-14'. Also involved in Golgi fragmentation. May be involved in phosphorylation of Cdk1 on 'Tyr-15' to a lesser degree, however tyrosine kinase activity is unclear and may be indirect. May be a downstream target of Notch signaling pathway during eye development. In Drosophila melanogaster (Fruit fly), this protein is Membrane-associated tyrosine- and threonine-specific cdc2-inhibitory kinase (Myt1).